The following is a 1085-amino-acid chain: DNA repair and recombination protein RAD26 (1085 aa).

S30 is modified (phosphoserine). Disordered regions lie at residues 118-141 (KEQVDQGAENKGSKEGLQRPGETE) and 190-219 (NLTDEDDNLSDQDYQMSGKESEDDEEEEND). Residues 128–141 (KGSKEGLQRPGETE) show a composition bias toward basic and acidic residues. Residues 210–219 (SEDDEEEEND) are compositionally biased toward acidic residues. Residues 309–518 (YELYQQNCGG…WSLFDFIFPG (210 aa)) enclose the Helicase ATP-binding domain. Position 322–329 (322–329 (DEMGLGKT)) interacts with ATP. The short motif at 469 to 472 (DEGH) is the DEGH box element. In terms of domain architecture, Helicase C-terminal spans 655–818 (VVKQLLLLWH…KRFFKIHELH (164 aa)).

Belongs to the SNF2/RAD54 helicase family.

It is found in the nucleus. The enzyme catalyses ATP + H2O = ADP + phosphate + H(+). In terms of biological role, may be involved in the preferential repair of active genes. This Saccharomyces cerevisiae (strain ATCC 204508 / S288c) (Baker's yeast) protein is DNA repair and recombination protein RAD26 (RAD26).